Here is a 215-residue protein sequence, read N- to C-terminus: Charged multivesicular body protein 5 (215 aa).

Positions 29–81 form a coiled coil; the sequence is QMDEKINGLNQELLAYDKQIKATRPGPAQNAIKQKAIRVLQQKKMYERQRDQM. Residues 186–215 form a disordered region; sequence TPSVPTTDPHQSSVDEYGLPIGQEASQQVV. Positions 188–199 are enriched in polar residues; it reads SVPTTDPHQSSV.

The protein belongs to the SNF7 family. In terms of assembly, probable peripherally associated component of the endosomal sorting required for transport complex III (ESCRT-III).

Its subcellular location is the endosome membrane. In terms of biological role, probable peripherally associated component of the endosomal sorting required for transport complex III (ESCRT-III) which is involved in multivesicular bodies (MVBs) formation and sorting of endosomal cargo proteins into MVBs. MVBs contain intraluminal vesicles (ILVs) that are generated by invagination and scission from the limiting membrane of the endosome and are delivered to lysosomes enabling degradation of membrane proteins. The chain is Charged multivesicular body protein 5 (chmp5) from Dictyostelium discoideum (Social amoeba).